Consider the following 351-residue polypeptide: Thiamine-phosphate synthase (351 aa).

A unknown region spans residues 1-129; the sequence is MVEPYSQKEQ…AKACKQMRYQ (129 aa). The tract at residues 65-85 is disordered; that stretch reads LRAARDTPGDPGTELTHPQEE. The tract at residues 130-351 is thiamine-phosphate synthase; it reads VYTLESNLMG…SQLNRIKPEL (222 aa). 4-amino-2-methyl-5-(diphosphooxymethyl)pyrimidine is bound by residues 177–181 and asparagine 209; that span reads QYRDK. Positions 210 and 229 each coordinate Mg(2+). Serine 248 is a binding site for 4-amino-2-methyl-5-(diphosphooxymethyl)pyrimidine. Position 274-276 (274-276) interacts with 2-[(2R,5Z)-2-carboxy-4-methylthiazol-5(2H)-ylidene]ethyl phosphate; sequence TPT. Residue lysine 277 participates in 4-amino-2-methyl-5-(diphosphooxymethyl)pyrimidine binding. Position 304 (glycine 304) interacts with 2-[(2R,5Z)-2-carboxy-4-methylthiazol-5(2H)-ylidene]ethyl phosphate.

This sequence belongs to the thiamine-phosphate synthase family. Requires Mg(2+) as cofactor.

The catalysed reaction is 2-[(2R,5Z)-2-carboxy-4-methylthiazol-5(2H)-ylidene]ethyl phosphate + 4-amino-2-methyl-5-(diphosphooxymethyl)pyrimidine + 2 H(+) = thiamine phosphate + CO2 + diphosphate. It carries out the reaction 2-(2-carboxy-4-methylthiazol-5-yl)ethyl phosphate + 4-amino-2-methyl-5-(diphosphooxymethyl)pyrimidine + 2 H(+) = thiamine phosphate + CO2 + diphosphate. The enzyme catalyses 4-methyl-5-(2-phosphooxyethyl)-thiazole + 4-amino-2-methyl-5-(diphosphooxymethyl)pyrimidine + H(+) = thiamine phosphate + diphosphate. The protein operates within cofactor biosynthesis; thiamine diphosphate biosynthesis; thiamine phosphate from 4-amino-2-methyl-5-diphosphomethylpyrimidine and 4-methyl-5-(2-phosphoethyl)-thiazole: step 1/1. In terms of biological role, condenses 4-methyl-5-(beta-hydroxyethyl)thiazole monophosphate (THZ-P) and 2-methyl-4-amino-5-hydroxymethyl pyrimidine pyrophosphate (HMP-PP) to form thiamine monophosphate (TMP). The polypeptide is Thiamine-phosphate synthase (Nostoc punctiforme (strain ATCC 29133 / PCC 73102)).